Consider the following 182-residue polypeptide: UPF0149 protein CGSHiEE_07975 (182 aa).

This sequence belongs to the UPF0149 family.

This is UPF0149 protein CGSHiEE_07975 from Haemophilus influenzae (strain PittEE).